The following is a 663-amino-acid chain: MAU2 chromatid cohesion factor homolog (663 aa).

2 TPR repeats span residues 455–488 (GGFY…ANAE) and 495–528 (SCSL…ASKI).

Belongs to the SCC4/mau-2 family. Interacts with Nipped-B to form the cohesin loading complex.

The protein resides in the nucleus. Its subcellular location is the nucleoplasm. Required for association of the cohesin complex with chromatin during interphase. Plays a role in sister chromatid cohesion and normal progression through prometaphase. The sequence is that of MAU2 chromatid cohesion factor homolog from Drosophila willistoni (Fruit fly).